The chain runs to 300 residues: Acetylglutamate kinase (300 aa).

Residues 68–69 (GG), Arg-90, and Asn-194 contribute to the substrate site.

This sequence belongs to the acetylglutamate kinase family. ArgB subfamily.

Its subcellular location is the cytoplasm. The enzyme catalyses N-acetyl-L-glutamate + ATP = N-acetyl-L-glutamyl 5-phosphate + ADP. Its pathway is amino-acid biosynthesis; L-arginine biosynthesis; N(2)-acetyl-L-ornithine from L-glutamate: step 2/4. Catalyzes the ATP-dependent phosphorylation of N-acetyl-L-glutamate. The chain is Acetylglutamate kinase from Methanocella arvoryzae (strain DSM 22066 / NBRC 105507 / MRE50).